Consider the following 289-residue polypeptide: Spore coat polysaccharide biosynthesis protein SpsD (289 aa).

Positions 137–289 (FELGPPEPGD…YHIWPGKEAK (153 aa)) constitute an N-acetyltransferase domain.

Its pathway is spore coat biogenesis; spore coat polysaccharide biosynthesis. In Bacillus subtilis (strain 168), this protein is Spore coat polysaccharide biosynthesis protein SpsD (spsD).